A 257-amino-acid polypeptide reads, in one-letter code: UPF0246 protein BF3795 (257 aa).

This sequence belongs to the UPF0246 family.

The sequence is that of UPF0246 protein BF3795 from Bacteroides fragilis (strain ATCC 25285 / DSM 2151 / CCUG 4856 / JCM 11019 / LMG 10263 / NCTC 9343 / Onslow / VPI 2553 / EN-2).